Consider the following 70-residue polypeptide: Large ribosomal subunit protein bL31 (70 aa).

Cys-16, Cys-18, Cys-37, and Cys-40 together coordinate Zn(2+).

The protein belongs to the bacterial ribosomal protein bL31 family. Type A subfamily. As to quaternary structure, part of the 50S ribosomal subunit. It depends on Zn(2+) as a cofactor.

In terms of biological role, binds the 23S rRNA. In Shewanella denitrificans (strain OS217 / ATCC BAA-1090 / DSM 15013), this protein is Large ribosomal subunit protein bL31.